Reading from the N-terminus, the 354-residue chain is Isocitrate dehydrogenase [NAD] regulatory subunit A, mitochondrial (354 aa).

5 residues coordinate substrate: Ser95, Asn97, Arg101, Arg111, and Arg132. Mg(2+) is bound by residues Asp219, Asp243, and Asp247. Residues 276 to 282 (HGTAPDI) and Asn289 contribute to the NADP(+) site.

Belongs to the isocitrate and isopropylmalate dehydrogenases family. As to quaternary structure, heterooligomer of catalytic and regulatory subunits. Mg(2+) is required as a cofactor. It depends on Mn(2+) as a cofactor.

Its subcellular location is the mitochondrion. The enzyme catalyses D-threo-isocitrate + NAD(+) = 2-oxoglutarate + CO2 + NADH. Its function is as follows. Performs an essential role in the oxidative function of the citric acid cycle. The protein is Isocitrate dehydrogenase [NAD] regulatory subunit A, mitochondrial (idhA) of Dictyostelium discoideum (Social amoeba).